We begin with the raw amino-acid sequence, 547 residues long: Cytochrome P450 monooxygenase fsoD (547 aa).

Residues 3 to 23 (DITLAAVSIGLFFYVGARAVL) form a helical membrane-spanning segment. Residue C490 coordinates heme.

This sequence belongs to the cytochrome P450 family. The cofactor is heme.

It is found in the membrane. The enzyme catalyses isomotiol + reduced [NADPH--hemoprotein reductase] + O2 = 2alpha-hydroxyisomotiol + oxidized [NADPH--hemoprotein reductase] + H2O + H(+). The protein operates within secondary metabolite biosynthesis; terpenoid biosynthesis. Its function is as follows. Cytochrome P450 monooxygenase; part of the gene cluster that mediates the biosynthesis of the enfumafungin-type antibiotic, fuscoatroside. Within the pathway, fsoD catalyzes the hydroxylation at position C2 of isomotiol to produce 2-alpha-hydroxy-isomotiol. FsoD may also hydroxylate the intermediates 3-O-(beta-D-glucopyranosyl)-isomotiol and 2-deacetoxy-fuscoatroside at the same position C2. The fuscoatroside biosynthesis is initiated by the cyclization of 2,3(S)-oxidosqualene through FsoA's terpene cyclase (TC) domain, leading to the formation of the fernane skeleton isomotiol, harboring a fernane triterpene skeleton with a C8-C9 double bond. Subsequently, C2-alpha-hydroxylation mediated by fsoD results in the production of 2-alpha-hydroxy-isomotiol, which is further acetylated by fsoF. The glycosyltransferase (GT) domain of FsoA may convert isomotiol, 2-alpha-hydroxy-isomotiol, and the acetylated derivative of 2-alpha-hydroxy-isomotiol into their corresponding glycosides 3-O-(beta-D-glucopyranosyl)-isomotiol, 3-O-(beta-D-glucopyranosyl)-2-alpha-hydroxy-isomotiol, and 3-O-(beta-D-glucopyranosyl)-2-alpha-acetoxy-isomotiol, which then undergo oxidative cleavage under the action of fsoE to form s 2-deacetoxy-fuscoatroside, 2-deacetyl-fuscoatroside, and fuscoatroside, respectively. Although hydroxylation followed by acetylation of 3-O-(beta-D-glucopyranosyl)-isomotiol and 2-deacetoxy-fuscoatroside by fsoD and fsoF could not be ruled out, this process is likely to occur with difficulty due to bulky steric hindrance caused by the presence of a glycan at C3 in these compounds. Interestingly, fsoE can also utilize the aglycones isomotiol and 2-alpha-hydroxy-isomotiol as substrates to generate 19-beta-hydroxy-isomotiol and 2-alpha,19-beta-dihydroxy-isomotiol, respectively. These reactions occur with lower efficiency. Finally, fsoE can further convert 2-alpha,19-beta-dihydroxy-isomotiol into 2-alpha-hydroxy-ismotiol-19-one and 2-alpha-hydroxy-ismotiol-19-one into 2-deacetyl-3-deglucopyranosyl-fuscoatroside. This is Cytochrome P450 monooxygenase fsoD from Humicola fuscoatra.